The chain runs to 265 residues: ATP synthase subunit a (265 aa).

Transmembrane regions (helical) follow at residues 26-46, 88-108, 132-152, 168-188, 195-217, and 231-251; these read VHLD…FFFY, IGSL…IDLI, DISA…FYTI, PFNH…TLLA, FRLF…MYMA, and LIWA…FMML.

The protein belongs to the ATPase A chain family. As to quaternary structure, F-type ATPases have 2 components, CF(1) - the catalytic core - and CF(0) - the membrane proton channel. CF(1) has five subunits: alpha(3), beta(3), gamma(1), delta(1), epsilon(1). CF(0) has three main subunits: a(1), b(2) and c(9-12). The alpha and beta chains form an alternating ring which encloses part of the gamma chain. CF(1) is attached to CF(0) by a central stalk formed by the gamma and epsilon chains, while a peripheral stalk is formed by the delta and b chains.

Its subcellular location is the cell inner membrane. Key component of the proton channel; it plays a direct role in the translocation of protons across the membrane. In Histophilus somni (strain 129Pt) (Haemophilus somnus), this protein is ATP synthase subunit a.